The following is a 394-amino-acid chain: MAIMSDLPRDLLAEILSRVPLASLRSVRFTCKKWNDLSKDRSFLKKQIVEAKKKQLKSKEFEVIMMRNFRVYLTSVDLHNDVNPSFTPKGTLTSFSDDANQHQVDNVSSVFHCDGLLLCITKDLNFRLVVWNPYFGQTRWIQPRNSYHIKDIYAIGYDENKNHKILRLKDQYYDYDSHPRARICEFELYSFESNSWKVVLDVSPDWYIHSYHRGLSVKGNTYWYATEKHGYVNFLICFDFTTEKFGPRLPLPFNATESFTYDDVVTLSSVGEEQLALLFQSDATLMMEIWVTSKVDPTEVLWNKLFLAVDHDMIEFDYELKFVADAGSFFIDQKKNVVVVFDKDMNEHTHRGMAYIVGKNGYFKRVDIGEEAYTSCFPLVCSYVPSSVQIRQLT.

The F-box domain maps to 1–47 (MAIMSDLPRDLLAEILSRVPLASLRSVRFTCKKWNDLSKDRSFLKKQ).

The sequence is that of F-box protein At2g17830 from Arabidopsis thaliana (Mouse-ear cress).